The chain runs to 307 residues: Nicotinamide/nicotinic acid mononucleotide adenylyltransferase 2 (307 aa).

NAD(+) is bound by residues serine 16 and phenylalanine 17. Histidine 24 serves as a coordination point for ATP. NAD(+) is bound by residues tryptophan 92 and threonine 95. 2 S-palmitoyl cysteine lipidation sites follow: cysteine 164 and cysteine 165. NAD(+)-binding residues include glycine 200, aspartate 202, leucine 212, tryptophan 213, and arginine 232. Threonine 271 to arginine 274 provides a ligand contact to ATP.

It belongs to the eukaryotic NMN adenylyltransferase family. Monomer. Requires Mg(2+) as cofactor. In terms of processing, degraded in response to injured neurite. Degradation is caused by polyubiquitination by MYCBP2 after recognition by FBXO45. Post-translationally, palmitoylated; palmitoylation is required for membrane association.

It is found in the golgi apparatus membrane. The protein resides in the cytoplasmic vesicle membrane. It localises to the cytoplasm. Its subcellular location is the cell projection. The protein localises to the axon. The catalysed reaction is beta-nicotinamide D-ribonucleotide + ATP + H(+) = diphosphate + NAD(+). It carries out the reaction nicotinate beta-D-ribonucleotide + ATP + H(+) = deamido-NAD(+) + diphosphate. Its pathway is cofactor biosynthesis; NAD(+) biosynthesis; NAD(+) from nicotinamide D-ribonucleotide: step 1/1. It participates in cofactor biosynthesis; NAD(+) biosynthesis; deamido-NAD(+) from nicotinate D-ribonucleotide: step 1/1. With respect to regulation, inhibited by P1-(adenosine-5')-P3-(nicotinamide-riboside-5')-triphosphate (Np3AD) and P1-(adenosine-5')-P4-(nicotinamide-riboside-5')-tetraphosphate (Np4AD). In terms of biological role, nicotinamide/nicotinate-nucleotide adenylyltransferase that acts as an axon maintenance factor. Axon survival factor required for the maintenance of healthy axons: acts by delaying Wallerian axon degeneration, an evolutionarily conserved process that drives the loss of damaged axons. Catalyzes the formation of NAD(+) from nicotinamide mononucleotide (NMN) and ATP. Can also use the deamidated form; nicotinic acid mononucleotide (NaMN) as substrate but with a lower efficiency. Cannot use triazofurin monophosphate (TrMP) as substrate. Also catalyzes the reverse reaction, i.e. the pyrophosphorolytic cleavage of NAD(+). For the pyrophosphorolytic activity prefers NAD(+), NADH and NaAD as substrates and degrades nicotinic acid adenine dinucleotide phosphate (NHD) less effectively. Fails to cleave phosphorylated dinucleotides NADP(+), NADPH and NaADP(+). Also acts as an activator of ADP-ribosylation by supporting the catalytic activity of PARP16 and promoting mono-ADP-ribosylation of ribosomes by PARP16. May be involved in the maintenance of axonal integrity. In Pongo abelii (Sumatran orangutan), this protein is Nicotinamide/nicotinic acid mononucleotide adenylyltransferase 2 (NMNAT2).